We begin with the raw amino-acid sequence, 219 residues long: Cytidylate kinase (219 aa).

15-23 (GPAASGKGT) contacts ATP.

Belongs to the cytidylate kinase family. Type 1 subfamily.

The protein localises to the cytoplasm. The enzyme catalyses CMP + ATP = CDP + ADP. The catalysed reaction is dCMP + ATP = dCDP + ADP. This Brucella melitensis biotype 2 (strain ATCC 23457) protein is Cytidylate kinase.